Reading from the N-terminus, the 388-residue chain is Processive diacylglycerol beta-glucosyltransferase (388 aa).

The protein belongs to the glycosyltransferase 28 family. UgtP subfamily.

The protein localises to the cell membrane. The catalysed reaction is a 1,2-diacyl-3-O-(beta-D-glucopyranosyl)-sn-glycerol + UDP-alpha-D-glucose = a 1,2-diacyl-3-O-(beta-D-Glc-(1-&gt;6)-beta-D-Glc)-sn-glycerol + UDP + H(+). It carries out the reaction a 1,2-diacyl-3-O-(beta-D-Glc-(1-&gt;6)-beta-D-Glc)-sn-glycerol + UDP-alpha-D-glucose = a 1,2-diacyl-3-O-(beta-D-Glc-(1-&gt;6)-beta-D-Glc-(1-&gt;6)-beta-D-Glc)-sn-glycerol + UDP + H(+). The enzyme catalyses a 1,2-diacyl-sn-glycerol + UDP-alpha-D-glucose = a 1,2-diacyl-3-O-(beta-D-glucopyranosyl)-sn-glycerol + UDP + H(+). Its pathway is glycolipid metabolism; diglucosyl-diacylglycerol biosynthesis. Functionally, processive glucosyltransferase involved in the biosynthesis of both the bilayer- and non-bilayer-forming membrane glucolipids. Is able to successively transfer up to three glucosyl residues to diacylglycerol (DAG), thereby catalyzing the formation of beta-monoglucosyl-DAG (3-O-(beta-D-glucopyranosyl)-1,2-diacyl-sn-glycerol), beta-diglucosyl-DAG (3-O-(beta-D-glucopyranosyl-beta-(1-&gt;6)-D-glucopyranosyl)-1,2-diacyl-sn-glycerol) and beta-triglucosyl-DAG (3-O-(beta-D-glucopyranosyl-beta-(1-&gt;6)-D-glucopyranosyl-beta-(1-&gt;6)-D-glucopyranosyl)-1,2-diacyl-sn-glycerol). Beta-diglucosyl-DAG is the predominant glycolipid found in Bacillales and is also used as a membrane anchor for lipoteichoic acid (LTA). The protein is Processive diacylglycerol beta-glucosyltransferase of Bacillus cereus (strain 03BB102).